Reading from the N-terminus, the 163-residue chain is Phosphopantetheine adenylyltransferase (163 aa).

Position 10 (Thr10) interacts with substrate. ATP contacts are provided by residues Thr10 to Phe11 and His18. Substrate is bound by residues Lys42, Leu75, and Arg89. ATP-binding positions include Gly90–Arg92, Glu100, and Tyr125–Ser131.

Belongs to the bacterial CoaD family. Homohexamer. Mg(2+) serves as cofactor.

Its subcellular location is the cytoplasm. The catalysed reaction is (R)-4'-phosphopantetheine + ATP + H(+) = 3'-dephospho-CoA + diphosphate. Its pathway is cofactor biosynthesis; coenzyme A biosynthesis; CoA from (R)-pantothenate: step 4/5. Its function is as follows. Reversibly transfers an adenylyl group from ATP to 4'-phosphopantetheine, yielding dephospho-CoA (dPCoA) and pyrophosphate. In Pelodictyon phaeoclathratiforme (strain DSM 5477 / BU-1), this protein is Phosphopantetheine adenylyltransferase.